The chain runs to 145 residues: Large ribosomal subunit protein uL11 (145 aa).

This sequence belongs to the universal ribosomal protein uL11 family. In terms of assembly, part of the ribosomal stalk of the 50S ribosomal subunit. Interacts with L10 and the large rRNA to form the base of the stalk. L10 forms an elongated spine to which L12 dimers bind in a sequential fashion forming a multimeric L10(L12)X complex. Post-translationally, one or more lysine residues are methylated.

Forms part of the ribosomal stalk which helps the ribosome interact with GTP-bound translation factors. In Rickettsia peacockii (strain Rustic), this protein is Large ribosomal subunit protein uL11.